Reading from the N-terminus, the 285-residue chain is tRNA pseudouridine synthase B (285 aa).

Asp-40 acts as the Nucleophile in catalysis.

Belongs to the pseudouridine synthase TruB family. Type 1 subfamily.

The enzyme catalyses uridine(55) in tRNA = pseudouridine(55) in tRNA. In terms of biological role, responsible for synthesis of pseudouridine from uracil-55 in the psi GC loop of transfer RNAs. The protein is tRNA pseudouridine synthase B of Caldanaerobacter subterraneus subsp. tengcongensis (strain DSM 15242 / JCM 11007 / NBRC 100824 / MB4) (Thermoanaerobacter tengcongensis).